Here is a 137-residue protein sequence, read N- to C-terminus: Ribosome-binding factor A (137 aa).

The protein belongs to the RbfA family. In terms of assembly, monomer. Binds 30S ribosomal subunits, but not 50S ribosomal subunits or 70S ribosomes.

The protein localises to the cytoplasm. Its function is as follows. One of several proteins that assist in the late maturation steps of the functional core of the 30S ribosomal subunit. Associates with free 30S ribosomal subunits (but not with 30S subunits that are part of 70S ribosomes or polysomes). Required for efficient processing of 16S rRNA. May interact with the 5'-terminal helix region of 16S rRNA. The protein is Ribosome-binding factor A of Erwinia tasmaniensis (strain DSM 17950 / CFBP 7177 / CIP 109463 / NCPPB 4357 / Et1/99).